The chain runs to 39 residues: Cecropin-D-like peptide (39 aa).

In terms of tissue distribution, hemolymph.

The protein localises to the secreted. Cecropins have lytic and antibacterial activity against several Gram-positive and Gram-negative bacteria. Has antibacterial activity against the Gram-positive bacteria M.luteus (MIC=34.4 uM), L.monocytogenes (MIC=34.4 uM), and S.lutea (MIC=34.4 uM), and the Gram-negative bacterium E.coli D31 (MIC=8.6 uM). Lacks antibacterial activity against the Gram-positive bacterium B.circulans, and the Gram-negative bacteria E.coli ATCC 25922 and S.typhimurium. Has antifungal activity against A.niger, but lacks antifungal activity against C.albicans, C.wickerhamii, F.oxysporum, P.pastoris, P.tannophilus, S.cerevisiae, T.harzianum, and Z.marxianus. This Galleria mellonella (Greater wax moth) protein is Cecropin-D-like peptide.